Here is a 565-residue protein sequence, read N- to C-terminus: Amino-acid acetyltransferase, mitochondrial (565 aa).

The segment at 38–58 (DIATATPAATPSDGAQPPAQN) is disordered. The N-acetyltransferase domain maps to 352–540 (LPVRVLRSME…EFGGGRLVRV (189 aa)).

Belongs to the acetyltransferase family.

Its subcellular location is the mitochondrion. It catalyses the reaction L-glutamate + acetyl-CoA = N-acetyl-L-glutamate + CoA + H(+). Its pathway is amino-acid biosynthesis; L-arginine biosynthesis; N(2)-acetyl-L-ornithine from L-glutamate: step 1/4. Functionally, N-acetylglutamate synthase involved in arginine biosynthesis. In Cryptococcus neoformans var. neoformans serotype D (strain B-3501A) (Filobasidiella neoformans), this protein is Amino-acid acetyltransferase, mitochondrial (ARG2).